We begin with the raw amino-acid sequence, 781 residues long: Lon protease (781 aa).

In terms of domain architecture, Lon N-terminal spans 16 to 214 (ANVLVTRGIV…KILSFTIDER (199 aa)). Residue 365–372 (GPPGVGKT) coordinates ATP. The Lon proteolytic domain maps to 601-781 (EYMPGVVNGM…YDDVYNRLFK (181 aa)). Active-site residues include Ser-688 and Lys-731.

This sequence belongs to the peptidase S16 family. As to quaternary structure, homohexamer. Organized in a ring with a central cavity.

It localises to the cytoplasm. The catalysed reaction is Hydrolysis of proteins in presence of ATP.. In terms of biological role, ATP-dependent serine protease that mediates the selective degradation of mutant and abnormal proteins as well as certain short-lived regulatory proteins. Required for cellular homeostasis and for survival from DNA damage and developmental changes induced by stress. Degrades polypeptides processively to yield small peptide fragments that are 5 to 10 amino acids long. Binds to DNA in a double-stranded, site-specific manner. In Malacoplasma penetrans (strain HF-2) (Mycoplasma penetrans), this protein is Lon protease.